The primary structure comprises 147 residues: Ribonuclease H (147 aa).

Residues 1 to 142 (MTEIVEIFTD…ADALARSAIT (142 aa)) form the RNase H type-1 domain. Mg(2+) is bound by residues Asp10, Glu48, Asp70, and Asp134.

This sequence belongs to the RNase H family. Monomer. It depends on Mg(2+) as a cofactor.

It is found in the cytoplasm. The enzyme catalyses Endonucleolytic cleavage to 5'-phosphomonoester.. Its function is as follows. Endonuclease that specifically degrades the RNA of RNA-DNA hybrids. The protein is Ribonuclease H of Nitrosococcus oceani (strain ATCC 19707 / BCRC 17464 / JCM 30415 / NCIMB 11848 / C-107).